The sequence spans 295 residues: Bifunctional protein FolD (295 aa).

NADP(+) contacts are provided by residues 166 to 168 (GRS), serine 191, and isoleucine 232.

Belongs to the tetrahydrofolate dehydrogenase/cyclohydrolase family. In terms of assembly, homodimer.

It carries out the reaction (6R)-5,10-methylene-5,6,7,8-tetrahydrofolate + NADP(+) = (6R)-5,10-methenyltetrahydrofolate + NADPH. It catalyses the reaction (6R)-5,10-methenyltetrahydrofolate + H2O = (6R)-10-formyltetrahydrofolate + H(+). It participates in one-carbon metabolism; tetrahydrofolate interconversion. Functionally, catalyzes the oxidation of 5,10-methylenetetrahydrofolate to 5,10-methenyltetrahydrofolate and then the hydrolysis of 5,10-methenyltetrahydrofolate to 10-formyltetrahydrofolate. The polypeptide is Bifunctional protein FolD (Rhodopseudomonas palustris (strain HaA2)).